We begin with the raw amino-acid sequence, 213 residues long: Uridine kinase (213 aa).

Position 15–22 (15–22 (GASASGKS)) interacts with ATP.

It belongs to the uridine kinase family.

The protein resides in the cytoplasm. It carries out the reaction uridine + ATP = UMP + ADP + H(+). It catalyses the reaction cytidine + ATP = CMP + ADP + H(+). It functions in the pathway pyrimidine metabolism; CTP biosynthesis via salvage pathway; CTP from cytidine: step 1/3. The protein operates within pyrimidine metabolism; UMP biosynthesis via salvage pathway; UMP from uridine: step 1/1. The polypeptide is Uridine kinase (Salmonella agona (strain SL483)).